A 253-amino-acid polypeptide reads, in one-letter code: MAISIKSPKEIKALRKAGELTAQALALLEREVRPGVSLLELDKMAEDFIKSSHARPAFKGLYGFPNSVCMSLNEVVIHGIPTDYVLQEGDIIGLDLGVEVDGYYGDSALTLPIGAISPQDEKLLACSKESLMHAINSIRVGMHFKELSQILESTITERGFVPLKGFCGHGIGKKPHEEPEIPNYLEKGVKPNSGPKIKEGMVFCLEPMVCQKQGEPKILADKWSVVSVDGLNTSHHEHTIAIVGNKAVILTER.

H78 is a substrate binding site. 3 residues coordinate a divalent metal cation: D95, D106, and H169. H176 is a substrate binding site. A divalent metal cation-binding residues include E206 and E237.

Belongs to the peptidase M24A family. Methionine aminopeptidase type 1 subfamily. As to quaternary structure, monomer. Co(2+) is required as a cofactor. The cofactor is Zn(2+). Requires Mn(2+) as cofactor. Fe(2+) serves as cofactor.

It carries out the reaction Release of N-terminal amino acids, preferentially methionine, from peptides and arylamides.. Functionally, removes the N-terminal methionine from nascent proteins. The N-terminal methionine is often cleaved when the second residue in the primary sequence is small and uncharged (Met-Ala-, Cys, Gly, Pro, Ser, Thr, or Val). Requires deformylation of the N(alpha)-formylated initiator methionine before it can be hydrolyzed. The chain is Methionine aminopeptidase from Helicobacter pylori (strain ATCC 700392 / 26695) (Campylobacter pylori).